Reading from the N-terminus, the 392-residue chain is MSVIIVGGGMAGATLALAISRLSHGALPVHLIEATAPESHAHPGFDGRAIALAAGTCQQLARIGVWQSLADCATAITTVHVSDRGHAGFVTLAAEDYQLAALGQVVELHNVGQRLFALLRKAPGVTLHCPDRVANVARTQSHVEVTLESGETLTGRVLVAADGTHSALATACGVDWQQEPYEQLAVIANVATSVAHEGRAFERFTQHGPLAMLPMSDGRCSLVWCHPLERREEVLSWSDEKFCRELQSAFGWRLGKITHAGKRSAYPLALTHAARSITHRTVLVGNAAQTLHPIAGQGFNLGMRDVMSLAETLTQAQERGEDMGDYGVLCRYQQRRQSDREATIGVTDSLVHLFANRWAPLVVGRNIGLMTMELFTPARDVLAQRTLGWVAR.

It belongs to the UbiH/COQ6 family. As to quaternary structure, component of the Ubi complex metabolon, which regroups five ubiquinone biosynthesis proteins (UbiE, UbiF, UbiG, UbiH and UbiI) and two accessory factors (UbiK and the lipid-binding protein UbiJ). FAD is required as a cofactor.

It is found in the cytoplasm. It functions in the pathway cofactor biosynthesis; ubiquinone biosynthesis. Functionally, is likely an oxygenase that introduces the hydroxyl group at carbon four of 2-octaprenyl-6-methoxyphenol resulting in the formation of 2-octaprenyl-6-methoxy-1,4-benzoquinol. This Escherichia coli (strain K12) protein is 2-octaprenyl-6-methoxyphenol hydroxylase (ubiH).